The chain runs to 496 residues: Transcription termination/antitermination protein NusA (496 aa).

Positions 135–200 (GQIITGIVKK…RGAQLFISRS (66 aa)) constitute an S1 motif domain. Positions 302–370 (CHTMDIAVDI…KNLNINENII (69 aa)) constitute a KH domain. 2 consecutive repeat copies span residues 364-414 (NINE…KSKL) and 440-490 (GMNA…RNIC). The segment at 364–490 (NINENIIKIL…LLIMTARNIC (127 aa)) is 2 X 51 AA approximate repeats.

Belongs to the NusA family. As to quaternary structure, monomer. Binds directly to the core enzyme of the DNA-dependent RNA polymerase and to nascent RNA.

Its subcellular location is the cytoplasm. Participates in both transcription termination and antitermination. This Buchnera aphidicola subsp. Acyrthosiphon pisum (strain APS) (Acyrthosiphon pisum symbiotic bacterium) protein is Transcription termination/antitermination protein NusA.